We begin with the raw amino-acid sequence, 218 residues long: uncharacterized protein (218 aa).

This is an uncharacterized protein from Mycoplasma pneumoniae (strain ATCC 29342 / M129 / Subtype 1) (Mycoplasmoides pneumoniae).